A 371-amino-acid chain; its full sequence is Maltose/maltodextrin import ATP-binding protein MalK (371 aa).

The ABC transporter domain occupies 4-234 (VQLQNVTKAW…PADRFVAGFI (231 aa)). Residue 36–43 (GPSGCGKS) coordinates ATP.

This sequence belongs to the ABC transporter superfamily. Maltooligosaccharide importer (TC 3.A.1.1.1) family. In terms of assembly, the complex is composed of two ATP-binding proteins (MalK), two transmembrane proteins (MalG and MalK) and a solute-binding protein (MalE).

Its subcellular location is the cell inner membrane. The catalysed reaction is D-maltose(out) + ATP + H2O = D-maltose(in) + ADP + phosphate + H(+). Functionally, part of the ABC transporter complex MalEFGK involved in maltose/maltodextrin import. Responsible for energy coupling to the transport system. In Escherichia coli O157:H7, this protein is Maltose/maltodextrin import ATP-binding protein MalK.